Here is a 115-residue protein sequence, read N- to C-terminus: Large ribosomal subunit protein bL19 (115 aa).

The protein belongs to the bacterial ribosomal protein bL19 family.

In terms of biological role, this protein is located at the 30S-50S ribosomal subunit interface and may play a role in the structure and function of the aminoacyl-tRNA binding site. In Streptococcus equi subsp. zooepidemicus (strain H70), this protein is Large ribosomal subunit protein bL19.